We begin with the raw amino-acid sequence, 331 residues long: MKVNEEGFAIDDKEYAMKTELKFASKHSSRLKIERNVMESYSKCDAQCKEHFSELIDFGQSPVWKWIVMTIVGPSLEELKMKYKPSDIPPSTILQCGLQTMKAIHDFHQIGFLHRDIKPANYCIGYGSKSETIYVLDFGLARKYRLPNGQVRPPRPKTKMIGTPRYCSRASHRCEELGRRDDYESWFFMFIDLVDTTLIDWKGLTRPDAYAKKQELFTKLKTYEKHPMFKVISIYLDNLVYDSEVKFGVLREAITDYARGCKLTLKEPLVWFNQSTCPSPSTAPGTGASRMATNIDLKSIASDRNEENSLDRSKTGTLSFNNSKNKKPSRY.

Residues 1 to 270 (MKVNEEGFAI…CKLTLKEPLV (270 aa)) form the Protein kinase domain. Aspartate 116 functions as the Proton acceptor in the catalytic mechanism. Residues 302–314 (SDRNEENSLDRSK) are compositionally biased toward basic and acidic residues. The interval 302-331 (SDRNEENSLDRSKTGTLSFNNSKNKKPSRY) is disordered.

The protein belongs to the protein kinase superfamily. Ser/Thr protein kinase family.

It catalyses the reaction L-seryl-[protein] + ATP = O-phospho-L-seryl-[protein] + ADP + H(+). The catalysed reaction is L-threonyl-[protein] + ATP = O-phospho-L-threonyl-[protein] + ADP + H(+). This Caenorhabditis elegans protein is Putative serine/threonine-protein kinase ZK507.1.